We begin with the raw amino-acid sequence, 143 residues long: Transcription antitermination protein NusB (143 aa).

This sequence belongs to the NusB family.

In terms of biological role, involved in transcription antitermination. Required for transcription of ribosomal RNA (rRNA) genes. Binds specifically to the boxA antiterminator sequence of the ribosomal RNA (rrn) operons. The chain is Transcription antitermination protein NusB from Desulforapulum autotrophicum (strain ATCC 43914 / DSM 3382 / VKM B-1955 / HRM2) (Desulfobacterium autotrophicum).